Reading from the N-terminus, the 559-residue chain is Sporulation protein kinase mde3 (559 aa).

The Protein kinase domain occupies 21–323; that stretch reads YLVKQKLGDG…TAKYCKEVFF (303 aa). Residues 27-35 and Lys-53 each bind ATP; that span reads LGDGSFGTV. Asp-150 functions as the Proton acceptor in the catalytic mechanism.

This sequence belongs to the protein kinase superfamily. Ser/Thr protein kinase family.

The catalysed reaction is L-seryl-[protein] + ATP = O-phospho-L-seryl-[protein] + ADP + H(+). It catalyses the reaction L-threonyl-[protein] + ATP = O-phospho-L-threonyl-[protein] + ADP + H(+). Its function is as follows. Protein kinase which is essential for spore formation. The chain is Sporulation protein kinase mde3 (mde3) from Schizosaccharomyces pombe (strain 972 / ATCC 24843) (Fission yeast).